The chain runs to 801 residues: Vacuolar transporter chaperone complex subunit 4 (801 aa).

Residues 1 to 692 (MPFSKAWRSA…MLKWTEHATR (692 aa)) lie on the Cytoplasmic side of the membrane. Positions 215, 286, 288, 312, 325, and 391 each coordinate ATP. Glutamate 441 provides a ligand contact to Mn(2+). Lysine 473 is a catalytic residue. The chain crosses the membrane as a helical span at residues 693–713 (LGLVGLGVIQFGNSMTLPGDV). Residues 714 to 723 (TQLSSFWRAN) are Vacuolar-facing. A helical membrane pass occupies residues 724 to 744 (FHIVLGIALVLVALMTLMYAL). The Cytoplasmic segment spans residues 745 to 768 (MTFKARSRRVYARKKIRFDDSWGP). A helical membrane pass occupies residues 769 to 789 (TVLTVFLAFGICVIAMMHILG). Over 790–801 (RYGPMLTGDDNF) the chain is Vacuolar.

This sequence belongs to the VTC4 family. The VTC core complex is an integral membrane heterooligomer composed of at least the catalytic subunit vtc4 and the accessory subunits vtc1 and vtc2. vtc1 is a small membrane protein without hydrophilic domain. Vtc2 and vtc4 are related and have 2 hydrophilic domains that face the cytosol, an N-terminal SPX domain and the central core domain. The central core in vtc4 is the catalytic domain. Requires Mn(2+) as cofactor.

The protein resides in the acidocalcisome membrane. The catalysed reaction is [phosphate](n) + ATP = [phosphate](n+1) + ADP. Activity of the enzyme is Mn(2+)-dependent and enhanced in the presence of pyrophosphate (PPi). Component of a polyphosphate synthase complex that utilizes ATP to synthesize and translocate polyphosphate to acidocalcisomes in epimastigotes, insect-stages of Trypanosoma brucei. Catalytic subunit of the vacuolar transporter chaperone (VTC) complex. The VTC complex acts as a vacuolar polyphosphate polymerase that catalyzes the synthesis of inorganic polyphosphate (polyP) via transfer of phosphate from ATP to a growing polyP chain, releasing ADP. VTC exposes its catalytic domain vtc4 to the cytosol, where the growing polyP chain winds through a tunnel-shaped pocket, integrating cytoplasmic polymer synthesis with polyP membrane translocation. The VTC complex carries 9 vacuolar transmembrane domains, which are likely to constitute the translocation channel into the organelle lumen. PolyP synthesis is tightly coupled to its transport into the vacuole lumen, in order to avoid otherwise toxic intermediates in the cytosol, and it depends on the proton gradient across the membrane, formed by V-ATPase. The VTC complex also plays a role in vacuolar membrane fusion. Essential for infection and parasite survival in the mammalian host. This is Vacuolar transporter chaperone complex subunit 4 from Trypanosoma cruzi (strain CL Brener).